The chain runs to 280 residues: L-proline cis-4-hydroxylase (280 aa).

Residues His-106, Asp-108, and His-154 each contribute to the Fe cation site. Arg-164 contributes to the 2-oxoglutarate binding site.

The protein belongs to the L-proline cis-4-/cis-3-hydroxylase family. The cofactor is Fe(2+).

The catalysed reaction is L-proline + 2-oxoglutarate + O2 = cis-4-hydroxy-L-proline + succinate + CO2. Inhibited by metal ions such as Co(2+), Zn(2+), Cu(2+) or Ni(2+). Is also inhibited by EDTA or diethylpyrocarbonate (DEPC) in vitro. Unlike the procollagen-proline cis-3- and trans-4-hydroxylases from mammals, does not necessarily require L-ascorbate for activity although it does increase the activity of the enzyme. In terms of biological role, dioxygenase that catalyzes the 2-oxoglutarate-dependent selective hydroxylation of free L-proline to cis-4-hydroxy-L-proline (cis-4-Hyp). The chain is L-proline cis-4-hydroxylase from Rhizobium meliloti (strain 1021) (Ensifer meliloti).